The chain runs to 55 residues: Large ribosomal subunit protein bL33C (55 aa).

This sequence belongs to the bacterial ribosomal protein bL33 family.

This Kineococcus radiotolerans (strain ATCC BAA-149 / DSM 14245 / SRS30216) protein is Large ribosomal subunit protein bL33C.